Consider the following 221-residue polypeptide: MSANLAPQIVEQLDPVDGPAFQRLTGCTDAQLADLTRFQALLTEWNEVMNLVGPATLPTYWNRHAWDSAQLLKLAPDARTWADLGAGAGLPGVVLAILLKGTPGAKIHLVESMTKRCKFLRAVADALDLPVEIHNARAEELDLKVEIVTARACAPMVRLLGYAQPYLKRGATAWFLKGQDVASELAEAATYWKFESDLRPSLSDPRGQIVQVKGLKSVRKV.

Residues Gly85, Leu90, 138-139, and Arg151 each bind S-adenosyl-L-methionine; that span reads AE.

This sequence belongs to the methyltransferase superfamily. RNA methyltransferase RsmG family.

The protein resides in the cytoplasm. The enzyme catalyses guanosine(527) in 16S rRNA + S-adenosyl-L-methionine = N(7)-methylguanosine(527) in 16S rRNA + S-adenosyl-L-homocysteine. Functionally, specifically methylates the N7 position of guanine in position 527 of 16S rRNA. This Caulobacter sp. (strain K31) protein is Ribosomal RNA small subunit methyltransferase G.